Here is a 334-residue protein sequence, read N- to C-terminus: WD repeat-containing protein 54 (334 aa).

WD repeat units lie at residues 116–155, 162–206, and 250–289; these read SSVQAMFARGIAASVHFICVGTCSGRVLVFDIPAKGPNIV, GHQT…TLLT, and AHARTISALDLAPEVGKLLSAAEDTFVHIWKLNRNPESGS.

In terms of assembly, homodimer and homotrimer; forms tight forms of dimers and trimers. Interacts with IZUMO1 and IZUMO1R/JUNO. Cross-linked to tightly form both dimers and trimers by TGM2. Cross-linking enhances the activation of EGF receptor-mediated signaling pathway. Cross-linking is inhibited by EGF. In terms of processing, ubiquitinated. EGF increases ubiquitination.

It localises to the vesicle. Its subcellular location is the cytoplasm. The protein resides in the cell membrane. Plays a role in the adhesion and fusion of the sperm-oocyte membrane through its interactions with IZUMO1 and IZUMO1R/JUNO. When cross-linked to form dimers and trimers, it has a regulatory effect on ERK signaling pathway activity in response to EGF stimulation. Colocalizes with the EGF receptor in WDR54-specific vesicle where it sustains the internalization and controls the degradation of the EGF receptor after EGF stimulation. This Mus musculus (Mouse) protein is WD repeat-containing protein 54.